The following is a 442-amino-acid chain: D-galactonate dehydratase family member SSBG_02010 (442 aa).

Aspartate 246 lines the Mg(2+) pocket. Histidine 248 is a D-arabinonate binding site. Residues glutamate 272 and glutamate 298 each coordinate Mg(2+). Residues glutamate 298, arginine 319, histidine 348, and glutamate 375 each coordinate D-arabinonate.

This sequence belongs to the mandelate racemase/muconate lactonizing enzyme family. GalD subfamily.

Functionally, has no detectable activity with D-mannonate and with a panel of 70 other acid sugars (in vitro), in spite of the conservation of the residues that are expected to be important for catalytic activity and cofactor binding. May have evolved a divergent function. The protein is D-galactonate dehydratase family member SSBG_02010 of Streptomyces sp. (strain SPB074).